The following is a 284-amino-acid chain: Four and a half LIM domains protein 5 (284 aa).

Residues 8 to 32 (CQYCMASLLGKKYVLKDDNPYCVSC) form a C4-type zinc finger. 4 consecutive LIM zinc-binding domains span residues 39–100 (NYCE…ECSS), 101–160 (KCFH…KEFA), 161–220 (HYCS…LYAK), and 223–283 (AACT…VDTD).

In terms of assembly, interacts with CREM (via the third LIM domain). Interacts (via second LIM domain) with SPAG8.

The protein resides in the nucleus. Its function is as follows. May be involved in the regulation of spermatogenesis. Stimulates CREM transcriptional activity in a phosphorylation-independent manner. This Bos taurus (Bovine) protein is Four and a half LIM domains protein 5 (FHL5).